Consider the following 154-residue polypeptide: Lipoprotein signal peptidase (154 aa).

2 consecutive transmembrane segments (helical) span residues 55-75 (GHMWFFYLITVIVIGIIIYIM) and 84-104 (LFSISLAFILGGAIGNFIDRV). Residues aspartate 111 and aspartate 129 contribute to the active site. The chain crosses the membrane as a helical span at residues 124-144 (IFNVADASLSVGVVLMLVYVF).

The protein belongs to the peptidase A8 family.

Its subcellular location is the cell membrane. The catalysed reaction is Release of signal peptides from bacterial membrane prolipoproteins. Hydrolyzes -Xaa-Yaa-Zaa-|-(S,diacylglyceryl)Cys-, in which Xaa is hydrophobic (preferably Leu), and Yaa (Ala or Ser) and Zaa (Gly or Ala) have small, neutral side chains.. Its pathway is protein modification; lipoprotein biosynthesis (signal peptide cleavage). Its function is as follows. This protein specifically catalyzes the removal of signal peptides from prolipoproteins. The chain is Lipoprotein signal peptidase from Listeria welshimeri serovar 6b (strain ATCC 35897 / DSM 20650 / CCUG 15529 / CIP 8149 / NCTC 11857 / SLCC 5334 / V8).